Reading from the N-terminus, the 126-residue chain is Small ribosomal subunit protein uS12c (126 aa).

The protein belongs to the universal ribosomal protein uS12 family. Part of the 30S ribosomal subunit.

The protein localises to the plastid. It localises to the chloroplast. In terms of biological role, with S4 and S5 plays an important role in translational accuracy. Located at the interface of the 30S and 50S subunits. The polypeptide is Small ribosomal subunit protein uS12c (rps12) (Trieres chinensis (Marine centric diatom)).